A 1045-amino-acid polypeptide reads, in one-letter code: E3 ubiquitin-protein ligase Topors (1045 aa).

Residues 1 to 35 (MGSQPPLGSPLSREEGEAPPPAPASEGRRRSRRVR) form a disordered region. The tract at residues 1–195 (MGSQPPLGSP…RERNASVYSP (195 aa)) is E3 ubiquitin-protein ligase activity. The required for DNA-binding stretch occupies residues 51–374 (ELAASAPARP…MAAFDQHANY (324 aa)). Residues K73, K76, K83, and K88 each participate in a glycyl lysine isopeptide (Lys-Gly) (interchain with G-Cter in SUMO2) cross-link. S98 carries the post-translational modification Phosphoserine. The RING-type zinc finger occupies 103–142 (CPICLDRFDNVSYLDRCLHKFCFRCVQEWSKNKAECPLCK). K159 participates in a covalent cross-link: Glycyl lysine isopeptide (Lys-Gly) (interchain with G-Cter in SUMO2). The residue at position 194 (S194) is a Phosphoserine. Residue K249 forms a Glycyl lysine isopeptide (Lys-Gly) (interchain with G-Cter in SUMO2) linkage. The interval 437 to 574 (SLLNTSDSSD…STSLSSPRNL (138 aa)) is required for sumoylation and localization to discrete nuclear foci. The interval 437-654 (SLLNTSDSSD…RSRTRDSSWS (218 aa)) is interaction with SUMO1. Residues 442–475 (SDSSDEELVTGGATSQIQGVQTNDDLNNDSDDSS) are disordered. A compositionally biased stretch (polar residues) spans 453 to 463 (GATSQIQGVQT). Residues 456 to 731 (SQIQGVQTND…RRTLSRAHYS (276 aa)) are interaction with p53/TP53. The interaction with TOP1 stretch occupies residues 456–882 (SQIQGVQTND…GKATDTTKHH (427 aa)). S499 carries the phosphoserine modification. The interval 511 to 692 (ETVKTQEQEQ…RSRNRDRYYL (182 aa)) is disordered. Residues 521–534 (SYSSGDSDVSRCSS) are compositionally biased toward low complexity. Basic and acidic residues predominate over residues 539-565 (LGKDEQINKGHCDSSTRIKSKKEEKRS). K560 participates in a covalent cross-link: Glycyl lysine isopeptide (Lys-Gly) (interchain with G-Cter in SUMO). The span at 566–578 (TSLSSPRNLNSSV) shows a compositional bias: polar residues. S585 is modified (phosphoserine). 3 stretches are compositionally biased toward basic residues: residues 588-597 (NHRHRKRGRS), 613-630 (KNHRKHHGKKRMKSKRSR), and 637-647 (PRGRRDKKRSR). A compositionally biased stretch (low complexity) spans 654 to 669 (SRRSQTLSLSSESTSR). Residue K701 forms a Glycyl lysine isopeptide (Lys-Gly) (interchain with G-Cter in SUMO2) linkage. The interval 713 to 936 (RDGYESSYRR…DNSGPQDPLQ (224 aa)) is disordered. Position 718 is a phosphoserine; by PLK1 (S718). Residues 721–730 (RRRTLSRAHY) are compositionally biased toward basic residues. Polar residues predominate over residues 731-747 (SRQSSSPEFRVQSFSER). S734 carries the post-translational modification Phosphoserine. Basic and acidic residues-rich tracts occupy residues 755-766 (NHSERKYYYYER) and 816-825 (FASKAKDSHY). Residues K819 and K837 each participate in a glycyl lysine isopeptide (Lys-Gly) (interchain with G-Cter in SUMO2) cross-link. Positions 854-863 (KHKRRKRKTR) are enriched in basic residues. Residues 854–917 (KHKRRKRKTR…ITIDSDSDKD (64 aa)) are interaction with UBE2I. Residues S864 and S866 each carry the phosphoserine modification. Positions 880–897 (KHHKKKKKKHKKKHKKHH) are enriched in basic residues. A phosphoserine mark is found at S912, S914, and S1028. A compositionally biased stretch (basic and acidic residues) spans 913–923 (DSDKDSEVKED).

As to quaternary structure, interacts with PARK7/DJ-1. Interacts with TOP1. Interacts with p53/TP53; can both ubiquitinate and sumoylate p53/TP53. Interacts with the SUMO1 conjugating enzyme UBE2I. Interacts with SUMO1. Interacts with NKX3-1; polyubiquitinates NKX3-1 and induces its proteasomal degradation. Interacts with SIN3A; sumoylates SIN3A. Interacts with IKBKE; induced by DNA damage. Post-translationally, phosphorylation at Ser-98 regulates the E3 ubiquitin-protein ligase activity but not the SUMO1-protein ligase activity. Phosphorylation at Ser-718 increases the E3 ubiquitin-protein ligase activity versus the SUMO1-protein ligase activity resulting in increased p53/TP53 ubiquitination and degradation. Sumoylated. Expressed at highest levels in testis and at lower levels in adrenal gland, bone marrow, brain, colon, heart, kidney, liver, muscle, ovary, pancreas, placenta, prostate, skeletal muscle, skin, small intestine, spleen, stomach, testis, thymus, thyroid and uterus. Expressed in the alveolar epithelium of the lung. Expression is commonly decreased in colon adenocarcinomas and lung cancers.

Its subcellular location is the nucleus. The protein resides in the PML body. It catalyses the reaction S-ubiquitinyl-[E2 ubiquitin-conjugating enzyme]-L-cysteine + [acceptor protein]-L-lysine = [E2 ubiquitin-conjugating enzyme]-L-cysteine + N(6)-ubiquitinyl-[acceptor protein]-L-lysine.. In terms of biological role, functions as an E3 ubiquitin-protein ligase and as an E3 SUMO1-protein ligase. Probable tumor suppressor involved in cell growth, cell proliferation and apoptosis that regulates p53/TP53 stability through ubiquitin-dependent degradation. May regulate chromatin modification through sumoylation of several chromatin modification-associated proteins. May be involved in DNA damage-induced cell death through IKBKE sumoylation. This Homo sapiens (Human) protein is E3 ubiquitin-protein ligase Topors (TOPORS).